A 273-amino-acid chain; its full sequence is Mitochondrial inner membrane protease ATP23 (273 aa).

Residues 1–11 are compositionally biased toward polar residues; it reads MASPQDNTPSG. Residues 1–33 are disordered; it reads MASPQDNTPSGATPKPQTHEETPDQVKLRINGG. Residues 17-27 show a composition bias toward basic and acidic residues; that stretch reads QTHEETPDQVK. His-170 is a binding site for a divalent metal cation. Glu-171 is a catalytic residue. Residue His-174 participates in a divalent metal cation binding.

Belongs to the peptidase M76 family.

The protein resides in the mitochondrion inner membrane. Has a dual role in the assembly of mitochondrial ATPase. Acts as a protease that removes N-terminal residues of mitochondrial ATPase CF(0) subunit 6 at the intermembrane space side. Also involved in the correct assembly of the membrane-embedded ATPase CF(0) particle, probably mediating association of subunit 6 with the subunit 9 ring. The protein is Mitochondrial inner membrane protease ATP23 (ATP23) of Pyricularia oryzae (strain 70-15 / ATCC MYA-4617 / FGSC 8958) (Rice blast fungus).